Consider the following 828-residue polypeptide: BEN domain-containing protein 3 (828 aa).

Lysine 20 participates in a covalent cross-link: Glycyl lysine isopeptide (Lys-Gly) (interchain with G-Cter in SUMO); alternate. A Glycyl lysine isopeptide (Lys-Gly) (interchain with G-Cter in SUMO1); alternate cross-link involves residue lysine 20. Lysine 20 is covalently cross-linked (Glycyl lysine isopeptide (Lys-Gly) (interchain with G-Cter in SUMO2); alternate). Glycyl lysine isopeptide (Lys-Gly) (interchain with G-Cter in SUMO2) cross-links involve residues lysine 41, lysine 56, lysine 58, lysine 73, lysine 128, lysine 129, lysine 137, lysine 142, and lysine 158. The Nuclear localization signal signature appears at 56-58 (KRK). Serine 164 is modified (phosphoserine). Residues 164-184 (SPSSLRLLNEPQKRDCGSTGA) are disordered. A Glycyl lysine isopeptide (Lys-Gly) (interchain with G-Cter in SUMO2) cross-link involves residue lysine 176. Residues 242 to 343 (PPPEYQLTAA…DFFSRFWAQR (102 aa)) enclose the BEN 1 domain. Serine 379 is subject to Phosphoserine. The BEN 2 domain maps to 387 to 487 (ASDHVVDTQD…DELEGLGLDA (101 aa)). A Glycyl lysine isopeptide (Lys-Gly) (interchain with G-Cter in SUMO2) cross-link involves residue lysine 427. The disordered stretch occupies residues 483–504 (LGLDAGSEGDPPRDDCYDSSSL). At serine 489 the chain carries Phosphoserine. Lysine 512 participates in a covalent cross-link: Glycyl lysine isopeptide (Lys-Gly) (interchain with G-Cter in SUMO); alternate. A Glycyl lysine isopeptide (Lys-Gly) (interchain with G-Cter in SUMO2); alternate cross-link involves residue lysine 512. Lysine 528 is covalently cross-linked (Glycyl lysine isopeptide (Lys-Gly) (interchain with G-Cter in SUMO2)). Residues 548 to 650 (VPGADCLLSK…ERCRRRDTEQ (103 aa)) form the BEN 3 domain. A Glycyl lysine isopeptide (Lys-Gly) (interchain with G-Cter in SUMO2) cross-link involves residue lysine 700. The BEN 4 domain maps to 715-816 (VPSPYLLSDK…ERCRRPNRKK (102 aa)).

As to quaternary structure, homooligomer, probably a homooctamer. Interacts with HDAC2 and HDAC3, but not HDAC1. Interacts with SALL4. Interacts with SMARCA5/SNF2H, BAZ2A/TIP5 and USP21. Interacts with the nucleosome remodeling and histone deacetylase (NuRD) repressor complex. Interacts (via BEN domains 1 and 3) with ERCC6L (via N-terminal TPR repeat); the interaction is direct. Post-translationally, sumoylated at Lys-20 by SUMO1 and at Lys-512 by SUMO1, SUMO2 and SUMO3. Sumoylation probably occurs sequentially, with that of Lys-20 preceding that of Lys-512. It does not alter association with heterochromatin, but is required for the repression of transcription. Expressed at least in heart, kidney, liver, ovary and spleen, with highest levels in spleen and lowest in heart. Expressed on the surface of T-cells.

The protein localises to the nucleus. The protein resides in the nucleolus. Transcriptional repressor which associates with the NoRC (nucleolar remodeling complex) complex and plays a key role in repressing rDNA transcription. The sumoylated form modulates the stability of the NoRC complex component BAZ2A/TIP5 by controlling its USP21-mediated deubiquitination. Binds to unmethylated major satellite DNA and is involved in the recruitment of the Polycomb repressive complex 2 (PRC2) to major satellites. Stimulates the ERCC6L translocase and ATPase activities. In Homo sapiens (Human), this protein is BEN domain-containing protein 3 (BEND3).